Here is a 637-residue protein sequence, read N- to C-terminus: Chaperone protein HtpG (637 aa).

The segment at 1 to 328 (MADIEELKFD…SSDLPLNISR (328 aa)) is a; substrate-binding. The segment at 329–556 (ETLQNNRIVE…DNSMDIRMER (228 aa)) is b. The segment at 488–508 (IGASDDSGDKTSEDSGESASD) is disordered. Basic and acidic residues predominate over residues 494-508 (SGDKTSEDSGESASD). Positions 557 to 637 (FLREQKQLNY…GVLAKIFSSK (81 aa)) are c.

Belongs to the heat shock protein 90 family. In terms of assembly, homodimer.

It localises to the cytoplasm. Its function is as follows. Molecular chaperone. Has ATPase activity. The sequence is that of Chaperone protein HtpG from Anaplasma phagocytophilum (strain HZ).